A 290-amino-acid chain; its full sequence is Protoheme IX farnesyltransferase 1 (290 aa).

8 helical membrane passes run 8–28, 36–56, 85–105, 108–128, 131–151, 152–172, 211–231, and 269–289; these read ITKP…FFLA, FLLL…GCVV, AAFV…FQVV, LSAV…TMWY, NSVY…LVGY, LAVT…FCLW, AYVV…EAGY, and LLVV…LPFI.

The protein belongs to the UbiA prenyltransferase family. Protoheme IX farnesyltransferase subfamily.

It localises to the cell inner membrane. The catalysed reaction is heme b + (2E,6E)-farnesyl diphosphate + H2O = Fe(II)-heme o + diphosphate. The protein operates within porphyrin-containing compound metabolism; heme O biosynthesis; heme O from protoheme: step 1/1. Functionally, converts heme B (protoheme IX) to heme O by substitution of the vinyl group on carbon 2 of heme B porphyrin ring with a hydroxyethyl farnesyl side group. The protein is Protoheme IX farnesyltransferase 1 of Vibrio campbellii (strain ATCC BAA-1116).